The chain runs to 426 residues: Monocarboxylate transporter 13 (426 aa).

The Cytoplasmic segment spans residues 1–10 (MAYRAEPPDG). The next 12 membrane-spanning stretches (helical) occupy residues 11–31 (GWGW…FGVL), 52–72 (VSWI…VGSA), 83–103 (VMTG…ATSL), 106–126 (LYLS…TPTL), 139–159 (LAMG…APLF), 172–192 (LLLV…LRPL), 221–241 (VALT…VAHL), 244–264 (LGWD…SDLV), 283–303 (LLML…VAEA), 306–326 (GLVA…PVAF), 338–358 (IYCG…LGAP), and 374–394 (FVVA…LPHF). At 395–426 (FCFSAPTSKPQDLVTEALDTKVPLPEEGLGED) the chain is on the cytoplasmic side.

Belongs to the major facilitator superfamily. Monocarboxylate porter (TC 2.A.1.13) family.

It localises to the golgi apparatus membrane. Its subcellular location is the cell membrane. In terms of biological role, proton-linked monocarboxylate transporter. May catalyze the transport of monocarboxylates across the plasma membrane. The polypeptide is Monocarboxylate transporter 13 (SLC16A13) (Bos taurus (Bovine)).